A 487-amino-acid chain; its full sequence is uncharacterized protein (487 aa).

The N-terminal stretch at 1–31 is a signal peptide; that stretch reads MRFHRQGISAIIGVLLIVLLGFCWKLSGSYG. N40, N68, N150, N220, N304, N367, N442, and N448 each carry an N-linked (GlcNAc...) asparagine glycan. Positions 141–176 are disordered; that stretch reads LERRHGRFGNGTNGDHPKGPPPPPPPPDEKGRGSQK.

N-glycosylated.

This is an uncharacterized protein from Saccharomyces cerevisiae (strain ATCC 204508 / S288c) (Baker's yeast).